Consider the following 290-residue polypeptide: 4-diphosphocytidyl-2-C-methyl-D-erythritol kinase (290 aa).

The active site involves Lys10. 95-105 lines the ATP pocket; that stretch reads PVAAGLAGGSS. The active site involves Asp137.

The protein belongs to the GHMP kinase family. IspE subfamily.

It carries out the reaction 4-CDP-2-C-methyl-D-erythritol + ATP = 4-CDP-2-C-methyl-D-erythritol 2-phosphate + ADP + H(+). It functions in the pathway isoprenoid biosynthesis; isopentenyl diphosphate biosynthesis via DXP pathway; isopentenyl diphosphate from 1-deoxy-D-xylulose 5-phosphate: step 3/6. Its function is as follows. Catalyzes the phosphorylation of the position 2 hydroxy group of 4-diphosphocytidyl-2C-methyl-D-erythritol. The chain is 4-diphosphocytidyl-2-C-methyl-D-erythritol kinase from Geobacillus thermodenitrificans (strain NG80-2).